The sequence spans 673 residues: F420-dependent formate dehydrogenase subunit alpha (673 aa).

The 4Fe-4S Mo/W bis-MGD-type domain maps to 3 to 59 (FKIVNTICPYCGVGCGLGLVVKDGRVIGIHPNKRHPINEGKLCAKGNYCYQFIHSKD). Residues Cys-10, Cys-13, Cys-17, and Cys-45 each coordinate [4Fe-4S] cluster. A non-standard amino acid (selenocysteine) is located at residue Sec-131.

This sequence belongs to the prokaryotic molybdopterin-containing oxidoreductase family. As to quaternary structure, dimer of an alpha (FdhA) and a beta (FdhB) subunit. The cofactor is [4Fe-4S] cluster. Requires Mo-bis(molybdopterin guanine dinucleotide) as cofactor. Zn(2+) serves as cofactor.

The catalysed reaction is oxidized coenzyme F420-(gamma-L-Glu)(n) + formate + 2 H(+) = reduced coenzyme F420-(gamma-L-Glu)(n) + CO2. Its function is as follows. Catalyzes the oxidation of formate to carbon dioxide, with coenzyme F420 as the electron acceptor. In Methanocaldococcus jannaschii (strain ATCC 43067 / DSM 2661 / JAL-1 / JCM 10045 / NBRC 100440) (Methanococcus jannaschii), this protein is F420-dependent formate dehydrogenase subunit alpha (fdhA).